We begin with the raw amino-acid sequence, 132 residues long: uncharacterized protein (132 aa).

The HTH merR-type domain maps to 1 to 69 (MNIGEAAKKS…LDEVGKLLTL (69 aa)). A DNA-binding region (H-T-H motif) is located at residues 4–23 (GEAAKKSGLTPKMIRYYESI).

Its subcellular location is the cytoplasm. This is an uncharacterized protein from Pseudomonas aeruginosa (strain ATCC 15692 / DSM 22644 / CIP 104116 / JCM 14847 / LMG 12228 / 1C / PRS 101 / PAO1).